The chain runs to 86 residues: Small ribosomal subunit protein bS16 (86 aa).

It belongs to the bacterial ribosomal protein bS16 family.

The polypeptide is Small ribosomal subunit protein bS16 (Acidithiobacillus ferrooxidans (strain ATCC 23270 / DSM 14882 / CIP 104768 / NCIMB 8455) (Ferrobacillus ferrooxidans (strain ATCC 23270))).